The sequence spans 98 residues: Integration host factor subunit alpha (98 aa).

Positions 49–70 are disordered; it reads FGNFDLRDKNQRPGRNPKTGED.

Belongs to the bacterial histone-like protein family. Heterodimer of an alpha and a beta chain.

Functionally, this protein is one of the two subunits of integration host factor, a specific DNA-binding protein that functions in genetic recombination as well as in transcriptional and translational control. This is Integration host factor subunit alpha from Serratia proteamaculans (strain 568).